A 227-amino-acid polypeptide reads, in one-letter code: Testis-expressed protein 30 (227 aa).

This chain is Testis-expressed protein 30 (TEX30), found in Homo sapiens (Human).